A 281-amino-acid polypeptide reads, in one-letter code: Aquaporin-9 (281 aa).

Over 1 to 17 the chain is Cytoplasmic; that stretch reads MGAFVNTKVYIENKNIR. A helical membrane pass occupies residues 18 to 36; that stretch reads DWLSEALSMFMYMSLLLGS. Over 37 to 50 the chain is Extracellular; that stretch reads AATGHFSGREDDAL. The helical transmembrane segment at 51-69 threads the bilayer; the sequence is FGVIFQGFSITFGIYIGGA. Residues 70–71 lie on the Cytoplasmic side of the membrane; it reads MS. The discontinuously helical intramembrane region spans 72–84; it reads GAIINPALTLAVA. Positions 76–78 match the NPA 1 motif; sequence NPA. The Cytoplasmic portion of the chain corresponds to 85–90; sequence LLGKIS. A helical membrane pass occupies residues 91 to 115; it reads WRKCIVLQSAQYIGSFIASAVVYLI. Residues 116–157 are Extracellular-facing; the sequence is YNDSLDAFGAGANFTATEPGVFRKDVAGIWSTFPKTYLKERG. N-linked (GlcNAc...) asparagine glycans are attached at residues Asn-117 and Asn-128. A helical membrane pass occupies residues 158-175; the sequence is AIFNQIFCSMLLTFGFLA. Residues 176–187 lie on the Cytoplasmic side of the membrane; sequence ISDYKNFRPSKG. The helical transmembrane segment at 188 to 204 threads the bilayer; that stretch reads LFPIAVGLLVMTVFLAF. Residues 205–207 lie on the Extracellular side of the membrane; the sequence is SYS. Positions 208–222 form an intramembrane region, discontinuously helical; the sequence is TGAAMNPARDFSPRL. The NPA 2 signature appears at 213-215; sequence NPA. At 223-241 the chain is on the extracellular side; the sequence is WSLIIGYGIEVFSYNQYEW. A helical membrane pass occupies residues 242-262; sequence FWIPWLMPYVGAMLGALIYQL. At 263–281 the chain is on the cytoplasmic side; that stretch reads LIGAQWSKGQKGESKHKDP.

Belongs to the MIP/aquaporin (TC 1.A.8) family.

It localises to the cell membrane. The enzyme catalyses H2O(in) = H2O(out). Functionally, aquaglyceroporin that may modulate the water content and osmolytes during anhydrobiosis. The chain is Aquaporin-9 from Milnesium tardigradum (Water bear).